The primary structure comprises 166 residues: Prorelaxin H1 (166 aa).

Positions 1 to 5 (SRAVA) are cleaved as a signal peptide. 3 disulfides stabilise this stretch: Cys-16–Cys-153, Cys-28–Cys-166, and Cys-152–Cys-157. A propeptide spans 37 to 139 (SLSQEDAPQT…KYLGLDTHSQ (103 aa)) (connecting peptide).

It belongs to the insulin family. Heterodimer of a B chain and an A chain linked by two disulfide bonds. In terms of tissue distribution, expressed in the corpus luteum of pregnancy but not in the placenta.

Its subcellular location is the secreted. In terms of biological role, relaxin is an ovarian hormone that acts with estrogen to produce dilatation of the birth canal in many mammals. May be involved in remodeling of connective tissues during pregnancy, promoting growth of pubic ligaments and ripening of the cervix. The chain is Prorelaxin H1 (RNL1) from Pan troglodytes (Chimpanzee).